The chain runs to 404 residues: RING-H2 finger protein ATL11 (404 aa).

The signal sequence occupies residues 1–36; sequence MNPKGRTNLNRSIIGGHDHGSILQLLLFLLLLSSHG. The helical transmembrane segment at 64–84 threads the bilayer; it reads AILMIVLVSVFFFLGFFSVYI. Residues 144 to 186 form an RING-type; atypical zinc finger; the sequence is CSVCLNEFEDDETLRLIPKCCHVFHPGCIDAWLRSHTTCPLCR. 2 disordered regions span residues 339 to 361 and 385 to 404; these read PYRT…VRAS and VGEN…SNTV.

It belongs to the RING-type zinc finger family. ATL subfamily.

The protein localises to the membrane. It carries out the reaction S-ubiquitinyl-[E2 ubiquitin-conjugating enzyme]-L-cysteine + [acceptor protein]-L-lysine = [E2 ubiquitin-conjugating enzyme]-L-cysteine + N(6)-ubiquitinyl-[acceptor protein]-L-lysine.. It participates in protein modification; protein ubiquitination. The sequence is that of RING-H2 finger protein ATL11 (ATL11) from Arabidopsis thaliana (Mouse-ear cress).